An 846-amino-acid polypeptide reads, in one-letter code: Protein kintoun (846 aa).

Disordered stretches follow at residues 1-21 (MSTAAGSRKKHSKLHNEERAD), 377-412 (DSGVELHSNSESPVEDDADGYMPETPELETAAPPDP), 581-657 (HTSI…DSTI), and 743-846 (HDSS…DDEI). Serine 378 is subject to Phosphoserine. Positions 399-408 (PETPELETAA) are enriched in low complexity. Composition is skewed to basic residues over residues 596-612 (LHKKPSKKQRKRNKKQR) and 750-766 (QRKKNQKRRNCKLRAQQ). Serine 770 is subject to Phosphoserine. The span at 821 to 832 (TRQDHADADAKN) shows a compositional bias: basic and acidic residues.

Belongs to the PIH1 family. Kintoun subfamily. In terms of assembly, interacts with Pp1alpha-96A, Pp1-87B, Pp1-13C and flw.

The protein resides in the cytoplasm. Required for cytoplasmic pre-assembly of axonemal dyneins, thereby playing a central role in motility in cilia and flagella. Involved in pre-assembly of dynein arm complexes in the cytoplasm before intraflagellar transport loads them for the ciliary compartment. The protein is Protein kintoun of Drosophila pseudoobscura pseudoobscura (Fruit fly).